Consider the following 332-residue polypeptide: Biotin synthase (332 aa).

A Radical SAM core domain is found at 46-275 (YYGKKVKLNM…SKEIRISGGR (230 aa)). Cys64, Cys68, and Cys71 together coordinate [4Fe-4S] cluster. Cys108, Cys140, Cys200, and Arg270 together coordinate [2Fe-2S] cluster.

The protein belongs to the radical SAM superfamily. Biotin synthase family. As to quaternary structure, homodimer. [4Fe-4S] cluster is required as a cofactor. [2Fe-2S] cluster serves as cofactor.

It carries out the reaction (4R,5S)-dethiobiotin + (sulfur carrier)-SH + 2 reduced [2Fe-2S]-[ferredoxin] + 2 S-adenosyl-L-methionine = (sulfur carrier)-H + biotin + 2 5'-deoxyadenosine + 2 L-methionine + 2 oxidized [2Fe-2S]-[ferredoxin]. It functions in the pathway cofactor biosynthesis; biotin biosynthesis; biotin from 7,8-diaminononanoate: step 2/2. Catalyzes the conversion of dethiobiotin (DTB) to biotin by the insertion of a sulfur atom into dethiobiotin via a radical-based mechanism. The protein is Biotin synthase of Lysinibacillus sphaericus (Bacillus sphaericus).